The following is an 829-amino-acid chain: G-type lectin S-receptor-like serine/threonine-protein kinase At1g34300 (829 aa).

The N-terminal stretch at 1-25 (MAVKTPFLKLLPLLLLLLHFPFSFS) is a signal peptide. 2 Bulb-type lectin domains span residues 26–140 (TIPL…SSFD) and 143–260 (TDTI…PVNA). At 26–421 (TIPLGSVIYA…KGDDNNSKVH (396 aa)) the chain is on the extracellular side. 8 N-linked (GlcNAc...) asparagine glycosylation sites follow: N46, N98, N130, N151, N172, N178, N189, and N195. The EGF-like domain occupies 264-301 (AVDQCLVYGYCGNFGICSYNDTNPICSCPSRNFDFVDV). 5 cysteine pairs are disulfide-bonded: C268–C280, C274–C289, C317–C399, C350–C373, and C354–C360. N-linked (GlcNAc...) asparagine glycans are attached at residues N283 and N320. One can recognise an Apple domain in the interval 317 to 399 (CSGNTTMLDL…VPSTSYVKVC (83 aa)). N-linked (GlcNAc...) asparagine glycosylation occurs at N416. A helical transmembrane segment spans residues 422–442 (LWIVAVAVIAGLLGLVAVEIG). The Cytoplasmic portion of the chain corresponds to 443-829 (LWWCCCRKNP…RISEGSMLGS (387 aa)). Positions 484-759 (KSFKEKLGAG…GKVVQMLEGI (276 aa)) constitute a Protein kinase domain. Residues 490–498 (LGAGGFGTV) and K512 contribute to the ATP site. At S532 the chain carries Phosphoserine. Residues 572-589 (DSAKFLTWEYRFNIALGT) form a caM-binding region. The active-site Proton acceptor is the D608. S625 and S799 each carry phosphoserine.

This sequence belongs to the protein kinase superfamily. Ser/Thr protein kinase family.

The protein resides in the cell membrane. It catalyses the reaction L-seryl-[protein] + ATP = O-phospho-L-seryl-[protein] + ADP + H(+). It carries out the reaction L-threonyl-[protein] + ATP = O-phospho-L-threonyl-[protein] + ADP + H(+). In Arabidopsis thaliana (Mouse-ear cress), this protein is G-type lectin S-receptor-like serine/threonine-protein kinase At1g34300.